Reading from the N-terminus, the 367-residue chain is DNA replication and repair protein RecF (367 aa).

An ATP-binding site is contributed by 30–37 (GANGSGKT).

The protein belongs to the RecF family.

Its subcellular location is the cytoplasm. In terms of biological role, the RecF protein is involved in DNA metabolism; it is required for DNA replication and normal SOS inducibility. RecF binds preferentially to single-stranded, linear DNA. It also seems to bind ATP. The sequence is that of DNA replication and repair protein RecF from Pseudomonas savastanoi pv. phaseolicola (strain 1448A / Race 6) (Pseudomonas syringae pv. phaseolicola (strain 1448A / Race 6)).